Here is a 139-residue protein sequence, read N- to C-terminus: Putative pre-16S rRNA nuclease (139 aa).

The protein belongs to the YqgF nuclease family.

The protein resides in the cytoplasm. Functionally, could be a nuclease involved in processing of the 5'-end of pre-16S rRNA. The sequence is that of Putative pre-16S rRNA nuclease from Streptococcus pyogenes serotype M2 (strain MGAS10270).